The sequence spans 66 residues: Large ribosomal subunit protein eL24 (66 aa).

Zn(2+) is bound by residues C7, C10, C33, and C37. The C4-type zinc-finger motif lies at 7 to 37; that stretch reads CSYCGKPFEPGTGKMYVRNDGRVLFFCSRKC.

This sequence belongs to the eukaryotic ribosomal protein eL24 family. Part of the 50S ribosomal subunit. Forms a cluster with proteins L3 and L14. Zn(2+) is required as a cofactor.

Its function is as follows. Binds to the 23S rRNA. This is Large ribosomal subunit protein eL24 from Pyrococcus furiosus (strain ATCC 43587 / DSM 3638 / JCM 8422 / Vc1).